The chain runs to 375 residues: MIFNPVISNHKLSHYIHVFCTFTTFCILGTETRQAITALSTYTPAFVTAPTVLWSNCSSCMLMGIMQSLNAYTWMKDHQVLFLGVTTGYCGALSSFSSMLLEMFEHSTNLTNGNIANHTKLPNRAYGIMEFLSVLLVHLMVSMGSLIFGRQLGKEVIVAYGSSSFSKPYTPPSDTVKENAGDVDTQEMEKNILEFKFKTPAPFFKKFFDVVDKLAYALAFPLIILFVVLCAYYENYSRGKWTLPCLFGIFAGFLRYWLAEMFNKTNKKFPLGTFLANVFATLLIGIFTMVQRGKKHFSTDIPIVNSLNSCHIVSALISGFCGTLSTISTFINEGYKLSFINMLIYYTVSIGISYCLLVITLGSYAWTRGLTNPIC.

Residues 1-11 (MIFNPVISNHK) are Cytoplasmic-facing. The chain crosses the membrane as a helical span at residues 12–32 (LSHYIHVFCTFTTFCILGTET). The Extracellular segment spans residues 33-34 (RQ). A helical transmembrane segment spans residues 35-55 (AITALSTYTPAFVTAPTVLWS). The Cytoplasmic portion of the chain corresponds to 56–79 (NCSSCMLMGIMQSLNAYTWMKDHQ). Residues 80–100 (VLFLGVTTGYCGALSSFSSML) form a helical membrane-spanning segment. Residues 101–127 (LEMFEHSTNLTNGNIANHTKLPNRAYG) lie on the Extracellular side of the membrane. N-linked (GlcNAc...) asparagine glycosylation is found at asparagine 109 and asparagine 117. Residues 128 to 148 (IMEFLSVLLVHLMVSMGSLIF) traverse the membrane as a helical segment. At 149–213 (GRQLGKEVIV…FKKFFDVVDK (65 aa)) the chain is on the cytoplasmic side. Residues 214–234 (LAYALAFPLIILFVVLCAYYE) form a helical membrane-spanning segment. N-linked (GlcNAc...) asparagine glycosylation is present at asparagine 235. At 235–241 (NYSRGKW) the chain is on the extracellular side. Residues 242–262 (TLPCLFGIFAGFLRYWLAEMF) form a helical membrane-spanning segment. The Cytoplasmic segment spans residues 263-268 (NKTNKK). The helical transmembrane segment at 269–289 (FPLGTFLANVFATLLIGIFTM) threads the bilayer. The Extracellular segment spans residues 290–310 (VQRGKKHFSTDIPIVNSLNSC). Residues 311-331 (HIVSALISGFCGTLSTISTFI) traverse the membrane as a helical segment. At 332–338 (NEGYKLS) the chain is on the cytoplasmic side. A helical membrane pass occupies residues 339–359 (FINMLIYYTVSIGISYCLLVI). Topologically, residues 360–375 (TLGSYAWTRGLTNPIC) are extracellular.

Belongs to the fluoride channel Fluc/FEX (TC 1.A.43) family.

It is found in the cell membrane. It carries out the reaction fluoride(in) = fluoride(out). Fluoride channel required for the rapid expulsion of cytoplasmic fluoride. The protein is Fluoride export protein 2 of Saccharomyces cerevisiae (strain ATCC 204508 / S288c) (Baker's yeast).